The chain runs to 497 residues: Transmembrane protein 200A (497 aa).

At 1–61 (MIATGGVITG…RGKIRLYSAS (61 aa)) the chain is on the cytoplasmic side. A compositionally biased stretch (polar residues) spans 20 to 30 (TRSQYHLSAQS). The interval 20–44 (TRSQYHLSAQSPGPAPEKKTTKRKP) is disordered. Residues 62–82 (GFFLVLGVLILMAGIAMAVLG) form a helical membrane-spanning segment. Over 83-127 (YWPHKDQPKAPETKMSANNTQSFGREQAGSIAQFLEQHMHSEKMK) the chain is Extracellular. Residue asparagine 100 is glycosylated (N-linked (GlcNAc...) asparagine). A helical membrane pass occupies residues 128-148 (MLGPFTMGIGIFIFICANAIL). Residues 149 to 497 (HENRDRETKV…LKRGTSETRF (349 aa)) are Cytoplasmic-facing. Over residues 353–375 (SNSATESASSTSSRSSLSPGSTS) the composition is skewed to low complexity. Disordered regions lie at residues 353-385 (SNSA…GAAR) and 400-438 (HSKS…GYTR). Residues 427-438 (RLDRSNSKGYTR) are compositionally biased toward basic and acidic residues.

The protein belongs to the TMEM200 family.

The protein localises to the membrane. This chain is Transmembrane protein 200A (tmem200a), found in Danio rerio (Zebrafish).